The sequence spans 296 residues: Glycine--tRNA ligase alpha subunit (296 aa).

It belongs to the class-II aminoacyl-tRNA synthetase family. As to quaternary structure, tetramer of two alpha and two beta subunits.

It is found in the cytoplasm. It catalyses the reaction tRNA(Gly) + glycine + ATP = glycyl-tRNA(Gly) + AMP + diphosphate. This chain is Glycine--tRNA ligase alpha subunit, found in Parasynechococcus marenigrum (strain WH8102).